A 234-amino-acid polypeptide reads, in one-letter code: Ribose-5-phosphate isomerase A (234 aa).

Substrate contacts are provided by residues 28 to 31 (TGST), 83 to 86 (DGAD), and 96 to 99 (KGGG). Catalysis depends on E105, which acts as the Proton acceptor. K123 contacts substrate.

This sequence belongs to the ribose 5-phosphate isomerase family. Homodimer.

It carries out the reaction aldehydo-D-ribose 5-phosphate = D-ribulose 5-phosphate. The protein operates within carbohydrate degradation; pentose phosphate pathway; D-ribose 5-phosphate from D-ribulose 5-phosphate (non-oxidative stage): step 1/1. In terms of biological role, catalyzes the reversible conversion of ribose-5-phosphate to ribulose 5-phosphate. The chain is Ribose-5-phosphate isomerase A from Bartonella quintana (strain Toulouse) (Rochalimaea quintana).